Consider the following 323-residue polypeptide: tRNA dimethylallyltransferase (323 aa).

18–25 contacts ATP; that stretch reads GPTASGKT. Residue 20–25 coordinates substrate; that stretch reads TASGKT. The segment at 44-47 is interaction with substrate tRNA; it reads DSAL.

This sequence belongs to the IPP transferase family. Monomer. The cofactor is Mg(2+).

It catalyses the reaction adenosine(37) in tRNA + dimethylallyl diphosphate = N(6)-dimethylallyladenosine(37) in tRNA + diphosphate. In terms of biological role, catalyzes the transfer of a dimethylallyl group onto the adenine at position 37 in tRNAs that read codons beginning with uridine, leading to the formation of N6-(dimethylallyl)adenosine (i(6)A). The polypeptide is tRNA dimethylallyltransferase (Blochmanniella floridana).